The chain runs to 874 residues: MKAAEIREKFLKFFESKGHTIVRSSSLVPGNDPTLMFTNSGMVQFKDVFLGTDRRPYTRATTAQRSVRAGGKHNDLENVGYTARHHTFFEMLGNFSFGDYFKHDAIRFAWELLTTVYMLPKDKLWVTVYQEDDEAYDIWAKEVGVPTERIIRIGDNKGARYASDNFWTMGDTGPCGPCTEIFYDHGPEVWGGPPGSPEEDGDRYIEIWNLVFMQFNRDAQGNMTRLPKPCVDTGMGLERLAAVLQHVHSNYEIDLFQNLIKAAARVTEVSDLNNNSLKVIADHIRACAFLIVDGVIPGNEGRGYVLRRIVRRAIRHGYKLGRKGAFFHKLVADLVAEMGAAYPELKEAEQRVTDVLRQEEERFFETIEHGMSILESALADLEAKGGKVLDGELAFKLHDTYGFPLDLTADVCRERGVTVDEPAFDDAMARQREQARAAGKFKAAQGLEYTGAKTTFHGYEEIAFDDAKVVALYVDGSAVTEVKAGQDAVVVLDHTPFYAESGGQVGDQGVLANASTRFAVADTLKVQADVIGHHGTLEQGTLKVGDVLRAEIDAQRRARTQRNHSATHLMHKALREVLGSHVQQKGSLVDADKTRFDFAHNAPLTDDEIRRVEQIVNDEILANAPGIVRVMPYDEAVKGGAMALFGEKYGDEVRVLDLGFSRELCGGTHVSRTGDIGLFKIVMEGGVAAGIRRVEAITGDNAVRYVQELDARVNEAAAALKAQPAELTQRIAQVQDQVKSLEKELAALKSKLASSQGDELAQQAVEVGGVHVLAATLDGADAKTLRETVDKLKDKLKSAAIVLAAVEGGKVSLIAGVTAEASKKVKAGELVNFVAQQVGGKGGGRPDMAQAGGTEPANLPAALAGVKGWVEARL.

Zn(2+) contacts are provided by H564, H568, C665, and H669.

It belongs to the class-II aminoacyl-tRNA synthetase family. It depends on Zn(2+) as a cofactor.

It is found in the cytoplasm. The enzyme catalyses tRNA(Ala) + L-alanine + ATP = L-alanyl-tRNA(Ala) + AMP + diphosphate. Functionally, catalyzes the attachment of alanine to tRNA(Ala) in a two-step reaction: alanine is first activated by ATP to form Ala-AMP and then transferred to the acceptor end of tRNA(Ala). Also edits incorrectly charged Ser-tRNA(Ala) and Gly-tRNA(Ala) via its editing domain. The chain is Alanine--tRNA ligase from Burkholderia multivorans (strain ATCC 17616 / 249).